The following is a 459-amino-acid chain: Plasma alpha-L-fucosidase (459 aa).

The signal sequence occupies residues 1–23 (MRLGLLMFLPLLLLATRYRAVTA). N-linked (GlcNAc...) asparagine glycosylation is found at asparagine 163 and asparagine 231. Serine 293 is subject to Phosphoserine. Asparagine 369 carries N-linked (GlcNAc...) asparagine glycosylation.

It belongs to the glycosyl hydrolase 29 family. Homotetramer.

The protein localises to the secreted. The enzyme catalyses an alpha-L-fucoside + H2O = L-fucose + an alcohol. In terms of biological role, alpha-L-fucosidase is responsible for hydrolyzing the alpha-1,6-linked fucose joined to the reducing-end N-acetylglucosamine of the carbohydrate moieties of glycoproteins. This Rattus norvegicus (Rat) protein is Plasma alpha-L-fucosidase (Fuca2).